We begin with the raw amino-acid sequence, 87 residues long: uncharacterized protein (87 aa).

The chain crosses the membrane as a helical span at residues 13–33; it reads LMIVSAVFGGIGIITTIVFVI. A disordered region spans residues 66–87; sequence EECGGSTETSSSKPKKKAKKEV. Over residues 78 to 87 the composition is skewed to basic residues; sequence KPKKKAKKEV.

Its subcellular location is the membrane. This is an uncharacterized protein from Caenorhabditis elegans.